Here is a 231-residue protein sequence, read N- to C-terminus: 26S proteasome non-ATPase regulatory subunit 10 (231 aa).

7 ANK repeats span residues 3-36 (GCVS…ATRT), 37-69 (DQDS…VNEK), 70-102 (DDAG…VNAV), 103-135 (NQNG…PDAK), 136-168 (NHYD…TNIQ), 169-201 (DTEG…IYIE), and 202-226 (NKEE…IAES).

As to quaternary structure, part of transient complex containing PSMD10, PSMC4, PSMC5 and PAAF1 formed during the assembly of the 26S proteasome. Stays associated throughout the assembly of the PA700/19S RC and is released upon association with the 20S core. Interacts with PSMC4. Interacts with RB1. Interacts with CDK4. Interacts with MDM2. Interacts with RELA. Associates with a CDK4:CCND2 serine/threonine kinase complex. Interacts with ARHGDIA and increases the interaction between ARHGDIA and RHOA, hence promotes ARHGDIA inactivation of RHOA and ROCK.

It localises to the cytoplasm. Its subcellular location is the nucleus. Its function is as follows. Acts as a chaperone during the assembly of the 26S proteasome, specifically of the PA700/19S regulatory complex (RC). In the initial step of the base subcomplex assembly is part of an intermediate PSMD10:PSMC4:PSMC5:PAAF1 module which probably assembles with a PSMD5:PSMC2:PSMC1:PSMD2 module. Independently of the proteasome, regulates EGF-induced AKT activation through inhibition of the RHOA/ROCK/PTEN pathway, leading to prolonged AKT activation. Plays an important role in RAS-induced tumorigenesis. Functionally, acts as an oncoprotein by being involved in negative regulation of tumor suppressors RB1 and p53/TP53. Overexpression is leading to phosphorylation of RB1 and proteasomal degradation of RB1. Regulates CDK4-mediated phosphorylation of RB1 by competing with CDKN2A for binding with CDK4. Facilitates binding of MDM2 to p53/TP53 and the mono- and polyubiquitination of p53/TP53 by MDM2 suggesting a function in targeting the TP53:MDM2 complex to the 26S proteasome. Involved in p53-independent apoptosis. Involved in regulation of NF-kappa-B by retaining it in the cytoplasm. Binds to the NF-kappa-B component RELA and accelerates its XPO1/CRM1-mediated nuclear export. The sequence is that of 26S proteasome non-ATPase regulatory subunit 10 (Psmd10) from Rattus norvegicus (Rat).